Reading from the N-terminus, the 459-residue chain is Bifunctional protein GlmU (459 aa).

A pyrophosphorylase region spans residues methionine 1 to lysine 229. Residues leucine 11–glycine 14, lysine 25, glutamine 76, glycine 81–threonine 82, tyrosine 103–aspartate 105, glycine 140, glutamate 154, and asparagine 227 each bind UDP-N-acetyl-alpha-D-glucosamine. Aspartate 105 contacts Mg(2+). Asparagine 227 is a binding site for Mg(2+). A linker region spans residues leucine 230 to asparagine 250. Positions glycine 251–asparagine 459 are N-acetyltransferase. Positions 333 and 351 each coordinate UDP-N-acetyl-alpha-D-glucosamine. Catalysis depends on histidine 363, which acts as the Proton acceptor. Positions 366 and 377 each coordinate UDP-N-acetyl-alpha-D-glucosamine. Residues alanine 380, asparagine 386–tyrosine 387, serine 405, and alanine 423 contribute to the acetyl-CoA site.

The protein in the N-terminal section; belongs to the N-acetylglucosamine-1-phosphate uridyltransferase family. In the C-terminal section; belongs to the transferase hexapeptide repeat family. In terms of assembly, homotrimer. Mg(2+) serves as cofactor.

It is found in the cytoplasm. It catalyses the reaction alpha-D-glucosamine 1-phosphate + acetyl-CoA = N-acetyl-alpha-D-glucosamine 1-phosphate + CoA + H(+). The enzyme catalyses N-acetyl-alpha-D-glucosamine 1-phosphate + UTP + H(+) = UDP-N-acetyl-alpha-D-glucosamine + diphosphate. It participates in nucleotide-sugar biosynthesis; UDP-N-acetyl-alpha-D-glucosamine biosynthesis; N-acetyl-alpha-D-glucosamine 1-phosphate from alpha-D-glucosamine 6-phosphate (route II): step 2/2. The protein operates within nucleotide-sugar biosynthesis; UDP-N-acetyl-alpha-D-glucosamine biosynthesis; UDP-N-acetyl-alpha-D-glucosamine from N-acetyl-alpha-D-glucosamine 1-phosphate: step 1/1. It functions in the pathway bacterial outer membrane biogenesis; LPS lipid A biosynthesis. Its function is as follows. Catalyzes the last two sequential reactions in the de novo biosynthetic pathway for UDP-N-acetylglucosamine (UDP-GlcNAc). The C-terminal domain catalyzes the transfer of acetyl group from acetyl coenzyme A to glucosamine-1-phosphate (GlcN-1-P) to produce N-acetylglucosamine-1-phosphate (GlcNAc-1-P), which is converted into UDP-GlcNAc by the transfer of uridine 5-monophosphate (from uridine 5-triphosphate), a reaction catalyzed by the N-terminal domain. The protein is Bifunctional protein GlmU of Buchnera aphidicola subsp. Acyrthosiphon pisum (strain 5A).